The chain runs to 408 residues: Homogentisate geranylgeranyltransferase (408 aa).

The N-terminal 68 residues, 1–68 (MQATTAAAAA…SAISQATSPR (68 aa)), are a transit peptide targeting the chloroplast. 9 consecutive transmembrane segments (helical) span residues 122 to 142 (HTIF…MKSI), 149 to 169 (VLKG…YVVG), 194 to 214 (SVAT…SIGI), 217 to 237 (GSVP…AYSI), 248 to 268 (ALLA…LAFF), 286 to 306 (LVFA…FKDI), 329 to 349 (VYQL…VVGA), 352 to 372 (THLL…LTLW), and 386 to 406 (VTSF…LIPF).

The protein belongs to the UbiA prenyltransferase family.

The protein resides in the plastid. It is found in the chloroplast membrane. It catalyses the reaction homogentisate + (2E,6E,10E)-geranylgeranyl diphosphate + H(+) = 6-geranylgeranyl-2-methylbenzene-1,4-diol + CO2 + diphosphate. Its pathway is cofactor biosynthesis; tocopherol biosynthesis. Functionally, involved in the synthesis of tocotrienol (vitamin E). Catalyzes the condensation of homogentisate and geranylgeranyl diphosphate to form 2-methyl-6-geranylgeranylbenzoquinol. Possesses low activity with phytyl diphosphate as substrate. This is Homogentisate geranylgeranyltransferase from Triticum aestivum (Wheat).